Reading from the N-terminus, the 582-residue chain is Guanine nucleotide-binding protein-like NSN1 (582 aa).

Positions 1–46 are enriched in basic residues; the sequence is MVKRSKKSKSKRVTLKQKHKVLKKVKEHHKKKAKDAKKLGLHRKPR. The interval 1 to 58 is disordered; that stretch reads MVKRSKKSKSKRVTLKQKHKVLKKVKEHHKKKAKDAKKLGLHRKPRVEKDPGIPNDWP. Residues 2–49 form a basic region; the sequence is VKRSKKSKSKRVTLKQKHKVLKKVKEHHKKKAKDAKKLGLHRKPRVEK. 3 short sequence motifs (nuclear localization signal) span residues 5-12, 22-29, and 69-76; these read SKKSKSKR, LKKVKEHH, and VRRARALE. Residues 15-94 are a coiled coil; sequence LKQKHKVLKK…RKERAKKRKL (80 aa). The 185-residue stretch at 127–311 folds into the CP-type G domain; the sequence is YKELVKVIEL…LLDCPGVVML (185 aa). The DARXP motif motif lies at 145-149; sequence DARDP. The tract at residues 175-178 is G4; that stretch reads NKID. GTP is bound at residue 175-178; that stretch reads NKID. The G5 stretch occupies residues 202–204; sequence KCS. Residues 260-267 are G1; that stretch reads GLPNVGKS. 263–268 lines the GTP pocket; the sequence is NVGKSS. Residues 281 to 456 are intermediate; sequence VGATPGLTRS…NEFNPVIIPS (176 aa). The interval 286–290 is G2; sequence GLTRS. Residues 304–307 and G307 each bind GTP; that span reads DCPG. The tract at residues 304-307 is G3; that stretch reads DCPG. Positions 463–551 are acidic; sequence DETMIEDESK…EEDLMDGDYD (89 aa). The tract at residues 469–545 is disordered; that stretch reads DESKTQTEEE…KKAGADEEDL (77 aa). Acidic residues predominate over residues 476–496; that stretch reads EEEAEHESDDDESMGGEEEEE. The span at 497–506 shows a compositional bias: basic and acidic residues; that stretch reads AGKTKEKSET. Positions 515 to 537 form a coiled coil; the sequence is AAESMLNTKKQKAEKKKRKKAKK. The Nuclear localization signal 4 signature appears at 522-529; that stretch reads TKKQKAEK. Basic residues predominate over residues 523-537; that stretch reads KKQKAEKKKRKKAKK.

It belongs to the TRAFAC class YlqF/YawG GTPase family. As to quaternary structure, interacts with EBP2 and PES. In terms of tissue distribution, mostly expressed in flowers, siliques and inflorescence apex, and, to a lower extent, in stems and leaves.

Its subcellular location is the nucleus. The protein localises to the nucleolus. Involved in the differentiation of epidermal cells, probably via the regulation of the expression of meristem-related genes (e.g. CLV3, STM, KNAT1, CUC2 and AG) and of leaf polarity-related genes (e.g. YAB5, FIL, AS2, PHB and PHV). May play a role in regulating cellular proliferation. Necessary for flower development, probably by preventing apical dominance through the down-regulation of AG expression. Required for embryogenesis, leaf and cotyledon development, as well as for leaf polarity establishment. Plays an important role in plant growth and senescence by modulating ribosome biogenesis in nucleolus. Possesses GTPAse activity in vitro. Possesses RNA binding activity in vitro. Associates with ribosomes. This Arabidopsis thaliana (Mouse-ear cress) protein is Guanine nucleotide-binding protein-like NSN1.